The chain runs to 736 residues: Elongation factor 2 (736 aa).

In terms of domain architecture, tr-type G spans 18–262; sequence TRVRNIGIIA…AVIKFVPNPV (245 aa). Residues 27-34, 93-97, and 147-150 contribute to the GTP site; these read AHVDHGKT, DTPGH, and NKVD. Diphthamide is present on His-603.

It belongs to the TRAFAC class translation factor GTPase superfamily. Classic translation factor GTPase family. EF-G/EF-2 subfamily.

The protein resides in the cytoplasm. In terms of biological role, catalyzes the GTP-dependent ribosomal translocation step during translation elongation. During this step, the ribosome changes from the pre-translocational (PRE) to the post-translocational (POST) state as the newly formed A-site-bound peptidyl-tRNA and P-site-bound deacylated tRNA move to the P and E sites, respectively. Catalyzes the coordinated movement of the two tRNA molecules, the mRNA and conformational changes in the ribosome. The protein is Elongation factor 2 of Metallosphaera sedula (strain ATCC 51363 / DSM 5348 / JCM 9185 / NBRC 15509 / TH2).